A 156-amino-acid chain; its full sequence is Small ribosomal subunit protein uS7 (156 aa).

The protein belongs to the universal ribosomal protein uS7 family. As to quaternary structure, part of the 30S ribosomal subunit. Contacts proteins S9 and S11.

In terms of biological role, one of the primary rRNA binding proteins, it binds directly to 16S rRNA where it nucleates assembly of the head domain of the 30S subunit. Is located at the subunit interface close to the decoding center, probably blocks exit of the E-site tRNA. The protein is Small ribosomal subunit protein uS7 of Deinococcus deserti (strain DSM 17065 / CIP 109153 / LMG 22923 / VCD115).